The chain runs to 293 residues: Protease HtpX (293 aa).

2 helical membrane passes run 4-24 and 34-54; these read IALF…VLSL and GLMI…LLMS. H139 is a binding site for Zn(2+). E140 is an active-site residue. Residue H143 participates in Zn(2+) binding. 2 helical membrane-spanning segments follow: residues 158-178 and 193-213; these read VVNT…AGFM and LIYF…ASII. Residue E222 coordinates Zn(2+).

This sequence belongs to the peptidase M48B family. It depends on Zn(2+) as a cofactor.

It is found in the cell inner membrane. The sequence is that of Protease HtpX from Escherichia fergusonii (strain ATCC 35469 / DSM 13698 / CCUG 18766 / IAM 14443 / JCM 21226 / LMG 7866 / NBRC 102419 / NCTC 12128 / CDC 0568-73).